Consider the following 420-residue polypeptide: Pyrophosphate--fructose 6-phosphate 1-phosphotransferase (420 aa).

Glycine 13 contributes to the diphosphate binding site. Substrate-binding positions include 142–144 (TVD), 190–192 (MGR), glutamate 247, and 297–300 (YLQR). The Proton acceptor role is filled by aspartate 144.

It belongs to the phosphofructokinase type A (PFKA) family. PPi-dependent PFK group II subfamily. Clade 'B2' sub-subfamily. In terms of assembly, homodimer. Mg(2+) is required as a cofactor. The cofactor is Co(2+). Requires Mn(2+) as cofactor.

It localises to the cytoplasm. It catalyses the reaction beta-D-fructose 6-phosphate + diphosphate = beta-D-fructose 1,6-bisphosphate + phosphate + H(+). Its pathway is carbohydrate degradation; glycolysis; D-glyceraldehyde 3-phosphate and glycerone phosphate from D-glucose: step 3/4. Non-allosteric. In terms of biological role, catalyzes the phosphorylation of D-fructose 6-phosphate, the first committing step of glycolysis. Uses inorganic phosphate (PPi) as phosphoryl donor instead of ATP like common ATP-dependent phosphofructokinases (ATP-PFKs), which renders the reaction reversible, and can thus function both in glycolysis and gluconeogenesis. Consistently, PPi-PFK can replace the enzymes of both the forward (ATP-PFK) and reverse (fructose-bisphosphatase (FBPase)) reactions. The polypeptide is Pyrophosphate--fructose 6-phosphate 1-phosphotransferase (Methylococcus capsulatus (strain ATCC 33009 / NCIMB 11132 / Bath)).